Consider the following 102-residue polypeptide: Small ribosomal subunit protein uS10 (102 aa).

This sequence belongs to the universal ribosomal protein uS10 family. Part of the 30S ribosomal subunit.

Its function is as follows. Involved in the binding of tRNA to the ribosomes. This Ligilactobacillus salivarius (strain UCC118) (Lactobacillus salivarius) protein is Small ribosomal subunit protein uS10.